The following is a 760-amino-acid chain: Endoplasmin homolog (760 aa).

The first 23 residues, 1–23 (MRFLLVGFVALLAVSAFIPNVYA), serve as a signal peptide directing secretion. Residues asparagine 95, aspartate 137, asparagine 150, and phenylalanine 187 each contribute to the ATP site. Residue asparagine 95 is glycosylated (N-linked (GlcNAc...) asparagine). Asparagine 423 carries N-linked (GlcNAc...) asparagine glycosylation. The disordered stretch occupies residues 727–760 (SQDAQVETEQHIEEAEPEPEAAEETTIEEEHSEL). Positions 741–760 (AEPEPEAAEETTIEEEHSEL) are enriched in acidic residues. The Prevents secretion from ER signature appears at 757–760 (HSEL).

Belongs to the heat shock protein 90 family.

Its subcellular location is the endoplasmic reticulum lumen. Its function is as follows. Molecular chaperone that functions in the processing and transport of secreted proteins. The protein is Endoplasmin homolog of Caenorhabditis elegans.